The primary structure comprises 565 residues: Adenine deaminase (565 aa).

It belongs to the metallo-dependent hydrolases superfamily. Adenine deaminase family. Mn(2+) is required as a cofactor.

The catalysed reaction is adenine + H2O + H(+) = hypoxanthine + NH4(+). The protein is Adenine deaminase of Cereibacter sphaeroides (strain ATCC 17025 / ATH 2.4.3) (Rhodobacter sphaeroides).